The sequence spans 400 residues: Elongation factor Tu (400 aa).

The 200-residue stretch at 10 to 209 (KEHVNIGTIG…QVDNWIDAPL (200 aa)) folds into the tr-type G domain. Residues 19–26 (GHVDHGKT) are G1. 19–26 (GHVDHGKT) provides a ligand contact to GTP. Threonine 26 lines the Mg(2+) pocket. Residues 61-65 (GITIN) form a G2 region. The tract at residues 82–85 (DCPG) is G3. GTP-binding positions include 82–86 (DCPGH) and 137–140 (NKVD). Residues 137–140 (NKVD) form a G4 region. Positions 179–181 (SAL) are G5.

Belongs to the TRAFAC class translation factor GTPase superfamily. Classic translation factor GTPase family. EF-Tu/EF-1A subfamily. As to quaternary structure, monomer.

Its subcellular location is the cytoplasm. It catalyses the reaction GTP + H2O = GDP + phosphate + H(+). In terms of biological role, GTP hydrolase that promotes the GTP-dependent binding of aminoacyl-tRNA to the A-site of ribosomes during protein biosynthesis. This chain is Elongation factor Tu, found in Mycoplasma mobile (strain ATCC 43663 / 163K / NCTC 11711) (Mesomycoplasma mobile).